Consider the following 249-residue polypeptide: tRNA (guanine-N(1)-)-methyltransferase (249 aa).

Residues G113 and 133–138 (IGDFVV) each bind S-adenosyl-L-methionine.

This sequence belongs to the RNA methyltransferase TrmD family. In terms of assembly, homodimer.

It localises to the cytoplasm. The enzyme catalyses guanosine(37) in tRNA + S-adenosyl-L-methionine = N(1)-methylguanosine(37) in tRNA + S-adenosyl-L-homocysteine + H(+). Its function is as follows. Specifically methylates guanosine-37 in various tRNAs. The polypeptide is tRNA (guanine-N(1)-)-methyltransferase (Neisseria gonorrhoeae (strain ATCC 700825 / FA 1090)).